A 614-amino-acid chain; its full sequence is 1-deoxy-D-xylulose-5-phosphate synthase (614 aa).

Residues His74 and 115 to 117 (AHS) contribute to the thiamine diphosphate site. Asp146 provides a ligand contact to Mg(2+). Residues 147–148 (GA), Asn175, Tyr282, and Glu363 contribute to the thiamine diphosphate site. Mg(2+) is bound at residue Asn175.

It belongs to the transketolase family. DXPS subfamily. As to quaternary structure, homodimer. Mg(2+) serves as cofactor. Requires thiamine diphosphate as cofactor.

The catalysed reaction is D-glyceraldehyde 3-phosphate + pyruvate + H(+) = 1-deoxy-D-xylulose 5-phosphate + CO2. It participates in metabolic intermediate biosynthesis; 1-deoxy-D-xylulose 5-phosphate biosynthesis; 1-deoxy-D-xylulose 5-phosphate from D-glyceraldehyde 3-phosphate and pyruvate: step 1/1. Functionally, catalyzes the acyloin condensation reaction between C atoms 2 and 3 of pyruvate and glyceraldehyde 3-phosphate to yield 1-deoxy-D-xylulose-5-phosphate (DXP). The sequence is that of 1-deoxy-D-xylulose-5-phosphate synthase from Nitrosomonas europaea (strain ATCC 19718 / CIP 103999 / KCTC 2705 / NBRC 14298).